We begin with the raw amino-acid sequence, 238 residues long: Orotidine 5'-phosphate decarboxylase (238 aa).

Residues Asp-11, Lys-32, 59–68 (DLKFHDIPNT), Thr-123, Arg-185, Gln-194, Gly-214, and Arg-215 contribute to the substrate site. The active-site Proton donor is Lys-61.

It belongs to the OMP decarboxylase family. Type 1 subfamily. As to quaternary structure, homodimer.

The catalysed reaction is orotidine 5'-phosphate + H(+) = UMP + CO2. The protein operates within pyrimidine metabolism; UMP biosynthesis via de novo pathway; UMP from orotate: step 2/2. Its function is as follows. Catalyzes the decarboxylation of orotidine 5'-monophosphate (OMP) to uridine 5'-monophosphate (UMP). The protein is Orotidine 5'-phosphate decarboxylase of Nostoc sp. (strain PCC 7120 / SAG 25.82 / UTEX 2576).